A 163-amino-acid chain; its full sequence is Large ribosomal subunit protein uL15 (163 aa).

Basic residues predominate over residues 1-29 (MSKKRRQRGSRTHGGGSHKNRRGAGHRGG). Disordered regions lie at residues 1–59 (MSKK…KTRR) and 135–163 (VADG…DEES). Basic and acidic residues-rich tracts occupy residues 33–46 (AGRD…HEPL) and 142–154 (LSER…AEKD).

Belongs to the universal ribosomal protein uL15 family. As to quaternary structure, part of the 50S ribosomal subunit.

Binds to the 23S rRNA. The sequence is that of Large ribosomal subunit protein uL15 from Natronomonas pharaonis (strain ATCC 35678 / DSM 2160 / CIP 103997 / JCM 8858 / NBRC 14720 / NCIMB 2260 / Gabara) (Halobacterium pharaonis).